We begin with the raw amino-acid sequence, 282 residues long: uncharacterized protein (282 aa).

4 helical membrane-spanning segments follow: residues 130 to 150 (WALLCVGIAQIALGTVQGFGL), 170 to 190 (STSWSIALGVIMVGAALWPSA), 191 to 211 (AAGLAGVLTAFVAILTGYVIV), and 223 to 243 (ILTHLPVVIGAVLAIMVWRSA). The interval 263–282 (DNASRGRRRGHLWPTDGSAA) is disordered.

It localises to the cell membrane. This is an uncharacterized protein from Mycobacterium tuberculosis (strain CDC 1551 / Oshkosh).